Here is a 2262-residue protein sequence, read N- to C-terminus: Klarsicht protein (2262 aa).

10 disordered regions span residues 1–140 (MEMQ…VGND), 345–410 (QQQQ…GEGN), 442–475 (AANG…LNEV), 514–561 (QSQS…PDIG), 800–832 (ATSS…DKEN), 859–898 (SNYD…QLQM), 1000–1031 (HLPP…VSPV), 1115–1157 (PSCK…SEGF), 1246–1316 (SGLA…ELGG), and 1533–1670 (VRRK…QQSR). The tract at residues 1–1774 (MEMQQENETG…KPTPELLDTE (1774 aa)) is required for apical microtubules localization. The Cytoplasmic segment spans residues 1–2215 (MEMQQENETG…KRGWAWRIAR (2215 aa)). Basic and acidic residues predominate over residues 58–67 (KIEHTTKPLK). Over residues 131–140 (NYGTNSVGND) the composition is skewed to polar residues. Residues 345-402 (QQQQLSSQQPASLTSNCSSESTSESATKSSSLSSGFASDPVTTPIGTAAAAPPSSSTH) show a composition bias toward low complexity. Residues 446–475 (LDDDEDEEEDTEDDSFGYEGEATEDDLNEV) are compositionally biased toward acidic residues. Over residues 514 to 525 (QSQSRSQQVPSQ) the composition is skewed to low complexity. Positions 546-560 (EADEELEEEDEDPDI) are enriched in acidic residues. Composition is skewed to low complexity over residues 809-818 (STAVSSTTAT) and 859-881 (SNYD…SNSN). The segment covering 882–894 (GRLTETSATSRVT) has biased composition (polar residues). Over residues 1006 to 1018 (PAKSAKSTKSQAS) the composition is skewed to low complexity. A compositionally biased stretch (polar residues) spans 1019–1028 (NATVSGSTLV). A compositionally biased stretch (polar residues) spans 1246–1259 (SGLASHSISESALD). Low complexity predominate over residues 1267–1280 (PRAASSSGTGSNAA). Basic residues predominate over residues 1288–1299 (SLRRRKARKKRI). Positions 1550 to 1559 (QSDQQQQQLQ) are enriched in low complexity. The segment covering 1560 to 1583 (VTPSLSASATALMTTPKNQSTSHQ) has biased composition (polar residues). 2 stretches are compositionally biased toward basic and acidic residues: residues 1586–1596 (HRAESVGRKLD) and 1610–1640 (RTSE…EKCI). Residues 1809–1842 (LTKQERRLQSALEEQEQQQESEQLKQQKLVEEEK) adopt a coiled-coil conformation. Residues 2092–2205 (HQQKQQIQQN…GEGADPAQTS (114 aa)) form a disordered region. The span at 2093–2105 (QQKQQIQQNQTQQ) shows a compositional bias: low complexity. Residues 2130–2142 (RRGKGARKARQAK) show a composition bias toward basic residues. Residues 2207–2262 (RGWAWRIARAAVPMQVALFTIFCAACLMQPNCCDNLNNLSMSFTPQLRYIRGPPPI) enclose the KASH domain. Residues 2216–2236 (AAVPMQVALFTIFCAACLMQP) traverse the membrane as a helical; Anchor for type IV membrane protein segment. At 2237 to 2262 (NCCDNLNNLSMSFTPQLRYIRGPPPI) the chain is on the perinuclear space side.

It belongs to the nesprin family. Core component of LINC complexes which are composed of inner nuclear membrane SUN domain-containing proteins coupled to outer nuclear membrane KASH domain-containing nesprins. Interacts with kud. Interacts with Msp300; this interaction allows the anchoring of Msp300 nuclear ring structure to the nuclear envelope. In terms of tissue distribution, expressed ubiquitously in the eye disk, but at much higher levels posterior to the morphogenetic furrow. Expressed in R-cells and also in non-neural cone cells.

It is found in the cytoplasm. The protein localises to the cytoskeleton. Its subcellular location is the microtubule organizing center. The protein resides in the perinuclear region. It localises to the nucleus membrane. It is found in the nucleus envelope. Its function is as follows. Component of the LINC (LInker of Nucleoskeleton and Cytoskeleton) complex involved in the connection between the nuclear lamina and the cytoskeleton. Plays a role in the nuclear positioning and links the nucleus to the microtubule organizing center (MTOC). Collaborates with Klar to promote even spacing of the myonuclei at the periphery of striated muscle fibers by mediating a tight association between a nuclear ring structure of Msp300 and the plus ends of a unique astral microtubule (MT) network. The chain is Klarsicht protein from Drosophila melanogaster (Fruit fly).